The chain runs to 230 residues: ATP synthase subunit a (230 aa).

5 helical membrane-spanning segments follow: residues 17–37, 78–98, 107–127, 165–187, and 198–218; these read LPIT…FIMA, IFPF…IGVI, DLSV…WFGI, LFGN…GFLV, and EAII…AGGI.

The protein belongs to the ATPase A chain family. As to quaternary structure, F-type ATPases have 2 components, CF(1) - the catalytic core - and CF(0) - the membrane proton channel. CF(1) has five subunits: alpha(3), beta(3), gamma(1), delta(1), epsilon(1). CF(0) has three main subunits: a(1), b(2) and c(9-12). The alpha and beta chains form an alternating ring which encloses part of the gamma chain. CF(1) is attached to CF(0) by a central stalk formed by the gamma and epsilon chains, while a peripheral stalk is formed by the delta and b chains.

Its subcellular location is the cell inner membrane. Functionally, key component of the proton channel; it plays a direct role in the translocation of protons across the membrane. The protein is ATP synthase subunit a of Legionella pneumophila (strain Paris).